A 248-amino-acid chain; its full sequence is Deoxyribose-phosphate aldolase (248 aa).

Asp-106 (proton donor/acceptor) is an active-site residue. The active-site Schiff-base intermediate with acetaldehyde is Lys-168. Catalysis depends on Lys-197, which acts as the Proton donor/acceptor.

It belongs to the DeoC/FbaB aldolase family. DeoC type 1 subfamily.

The protein localises to the cytoplasm. It carries out the reaction 2-deoxy-D-ribose 5-phosphate = D-glyceraldehyde 3-phosphate + acetaldehyde. Its pathway is carbohydrate degradation; 2-deoxy-D-ribose 1-phosphate degradation; D-glyceraldehyde 3-phosphate and acetaldehyde from 2-deoxy-alpha-D-ribose 1-phosphate: step 2/2. Its function is as follows. Catalyzes a reversible aldol reaction between acetaldehyde and D-glyceraldehyde 3-phosphate to generate 2-deoxy-D-ribose 5-phosphate. In Sinorhizobium medicae (strain WSM419) (Ensifer medicae), this protein is Deoxyribose-phosphate aldolase.